We begin with the raw amino-acid sequence, 600 residues long: Elongation factor 4 (600 aa).

The tr-type G domain maps to 5 to 187; that stretch reads KYIRNFSIIA…AIINKLPAPK (183 aa). GTP contacts are provided by residues 17–22 and 134–137; these read DHGKST and NKID.

This sequence belongs to the TRAFAC class translation factor GTPase superfamily. Classic translation factor GTPase family. LepA subfamily.

The protein resides in the cell inner membrane. The enzyme catalyses GTP + H2O = GDP + phosphate + H(+). Its function is as follows. Required for accurate and efficient protein synthesis under certain stress conditions. May act as a fidelity factor of the translation reaction, by catalyzing a one-codon backward translocation of tRNAs on improperly translocated ribosomes. Back-translocation proceeds from a post-translocation (POST) complex to a pre-translocation (PRE) complex, thus giving elongation factor G a second chance to translocate the tRNAs correctly. Binds to ribosomes in a GTP-dependent manner. This chain is Elongation factor 4, found in Rickettsia prowazekii (strain Madrid E).